Reading from the N-terminus, the 264-residue chain is uncharacterized protein (264 aa).

Residues 57–264 are disordered; it reads RPPASPCPPR…VYPHPHLTAT (208 aa). Over residues 140-153 the composition is skewed to basic residues; it reads GKARRSPGRRRHPH. A compositionally biased stretch (low complexity) spans 154 to 165; the sequence is SSFPQASSPSSP.

This is an uncharacterized protein from Homo sapiens (Human).